Here is a 350-residue protein sequence, read N- to C-terminus: 2-oxoglutarate-dependent ethylene/succinate-forming enzyme (350 aa).

The region spanning 166 to 286 (GWHHMRVLRF…RFACAYFHEP (121 aa)) is the Fe2OG dioxygenase domain. Residues His189 and His268 each coordinate Fe cation.

It belongs to the iron/ascorbate-dependent oxidoreductase family. Monomer. Fe(2+) serves as cofactor.

It carries out the reaction 2-oxoglutarate + O2 + 2 H(+) = ethene + 3 CO2 + H2O. The enzyme catalyses L-arginine + 2-oxoglutarate + O2 = guanidine + L-glutamate 5-semialdehyde + succinate + CO2. It participates in alkene biosynthesis; ethylene biosynthesis via 2-oxoglutarate. Activated by catalase. Inhibited by chelating reagents such as EDTA and Tiron (4,5-dihydroxy-1,3-benzene disulphonic acid), and by DTNB (5,5'-dithio-bis-2-nitrobenzoate) and hydrogen peroxide. Its function is as follows. Simultaneously catalyzes two reactions, namely formation of ethylene and of succinate from 2-oxoglutarate, with a molar ratio of 2:1. The protein is 2-oxoglutarate-dependent ethylene/succinate-forming enzyme (efe) of Pseudomonas savastanoi pv. phaseolicola (Pseudomonas syringae pv. phaseolicola).